We begin with the raw amino-acid sequence, 166 residues long: Endoribonuclease YbeY (166 aa).

The Zn(2+) site is built by H132, H136, and H142.

Belongs to the endoribonuclease YbeY family. Zn(2+) is required as a cofactor.

The protein localises to the cytoplasm. Its function is as follows. Single strand-specific metallo-endoribonuclease involved in late-stage 70S ribosome quality control and in maturation of the 3' terminus of the 16S rRNA. The sequence is that of Endoribonuclease YbeY from Clostridium acetobutylicum (strain ATCC 824 / DSM 792 / JCM 1419 / IAM 19013 / LMG 5710 / NBRC 13948 / NRRL B-527 / VKM B-1787 / 2291 / W).